We begin with the raw amino-acid sequence, 165 residues long: Small ribosomal subunit protein uS5 (165 aa).

In terms of domain architecture, S5 DRBM spans 13–76; that stretch reads LEENVVSINR…EDAKRHLIKV (64 aa).

The protein belongs to the universal ribosomal protein uS5 family. As to quaternary structure, part of the 30S ribosomal subunit. Contacts proteins S4 and S8.

Functionally, with S4 and S12 plays an important role in translational accuracy. Its function is as follows. Located at the back of the 30S subunit body where it stabilizes the conformation of the head with respect to the body. The polypeptide is Small ribosomal subunit protein uS5 (Oenococcus oeni (strain ATCC BAA-331 / PSU-1)).